The primary structure comprises 348 residues: MTAPSQVLKIRRPDDWHLHLRDGDMLKTVVPYTSEIYGRAIVMPNLAPPVTTVEAAVAYRQRILDTVPAGHDFTPLMTCYLTDSLDPNELERGFNEGVFTAAKLYPANATTNSSHGVTSVDAIMPVLERMEKIGMPLLVHGEVTHADIDIFDREARFIESVMEPLRQRLTALKVVFEHITTKDAADYVRDGNERLAATITPQHLMFNRNHMLVGGVRPHLYCLPILKRNIHQQALRELVASGFNRVFLGTDSAPHARHRKESSCGCAGCFNAPTALGSYATVFEEMNALQHFEAFCSVNGPQFYGLPVNDTFIELVREEQQVAESIALTDDTLVPFLAGETVRWSVKQ.

Residues H17 and H19 each contribute to the Zn(2+) site. Residues 19–21 and N45 each bind substrate; that span reads HLR. Zn(2+) is bound by residues K103, H140, and H178. K103 carries the post-translational modification N6-carboxylysine. Residue H140 participates in substrate binding. Residue L223 coordinates substrate. D251 contributes to the Zn(2+) binding site. D251 is a catalytic residue. Positions 255 and 267 each coordinate substrate.

This sequence belongs to the metallo-dependent hydrolases superfamily. DHOase family. Class II DHOase subfamily. Homodimer. Zn(2+) is required as a cofactor.

The catalysed reaction is (S)-dihydroorotate + H2O = N-carbamoyl-L-aspartate + H(+). It functions in the pathway pyrimidine metabolism; UMP biosynthesis via de novo pathway; (S)-dihydroorotate from bicarbonate: step 3/3. Its function is as follows. Catalyzes the reversible cyclization of carbamoyl aspartate to dihydroorotate. The sequence is that of Dihydroorotase from Escherichia coli O7:K1 (strain IAI39 / ExPEC).